The following is a 256-amino-acid chain: tRNA pseudouridine synthase A (256 aa).

Residue Asp55 is the Nucleophile of the active site. Tyr113 lines the substrate pocket.

This sequence belongs to the tRNA pseudouridine synthase TruA family. As to quaternary structure, homodimer.

The catalysed reaction is uridine(38/39/40) in tRNA = pseudouridine(38/39/40) in tRNA. Functionally, formation of pseudouridine at positions 38, 39 and 40 in the anticodon stem and loop of transfer RNAs. The sequence is that of tRNA pseudouridine synthase A from Ligilactobacillus salivarius (strain UCC118) (Lactobacillus salivarius).